The following is a 199-amino-acid chain: FMN-dependent NADH:quinone oxidoreductase (199 aa).

FMN contacts are provided by residues 17–19 (SNS) and 87–90 (MYNF).

It belongs to the azoreductase type 1 family. In terms of assembly, homodimer. It depends on FMN as a cofactor.

The catalysed reaction is 2 a quinone + NADH + H(+) = 2 a 1,4-benzosemiquinone + NAD(+). It carries out the reaction N,N-dimethyl-1,4-phenylenediamine + anthranilate + 2 NAD(+) = 2-(4-dimethylaminophenyl)diazenylbenzoate + 2 NADH + 2 H(+). Functionally, quinone reductase that provides resistance to thiol-specific stress caused by electrophilic quinones. Its function is as follows. Also exhibits azoreductase activity. Catalyzes the reductive cleavage of the azo bond in aromatic azo compounds to the corresponding amines. The protein is FMN-dependent NADH:quinone oxidoreductase of Mycoplasma mycoides subsp. mycoides SC (strain CCUG 32753 / NCTC 10114 / PG1).